The primary structure comprises 242 residues: Uridylate kinase (242 aa).

ATP is bound at residue 8 to 11 (KFSG). Glycine 50 provides a ligand contact to UMP. The ATP site is built by glycine 51 and arginine 55. Residues aspartate 71 and 132–139 (TGNPFFTT) each bind UMP. The ATP site is built by threonine 159, tyrosine 165, and aspartate 168.

This sequence belongs to the UMP kinase family. In terms of assembly, homohexamer.

Its subcellular location is the cytoplasm. It carries out the reaction UMP + ATP = UDP + ADP. Its pathway is pyrimidine metabolism; CTP biosynthesis via de novo pathway; UDP from UMP (UMPK route): step 1/1. Inhibited by UTP. Functionally, catalyzes the reversible phosphorylation of UMP to UDP. The sequence is that of Uridylate kinase from Nitratiruptor sp. (strain SB155-2).